The chain runs to 118 residues: DNA-binding protein inhibitor ID-3-A (118 aa).

The region spanning 32 to 84 (SHKGPGMDEPMGLLYDMNGCYSKLKELVPGIPQGSKLSQVEILQHVIDYIFDL) is the bHLH domain.

As to quaternary structure, homodimer. Heterodimer with other HLH proteins. Interacts (via HLH domain) with the bHLH protein hes4/hairy2 (via Orange domain). Interacts with stat3. As to expression, at gastrula stage, expressed in all three germ layers, but becomes localized to discrete domains of the developing nervous system during neurulation, including the anterior neural plate, cement gland, eye anlagen, otic placode and both cranial and trunk premigratory and early migratory neural crest cells. Also expressed in the most dorsal and ventral portions of the myotome, the developing heart and anterior blood islets, and in the tail fin mesenchyme. Expressed at a low level in limbs, with expression decreasing as limbs develop, but expressed at a high level in blastemas (regenerated limbs), where expression is localized to both the blastermal epidermis and mesenchyme. Widely expressed in adults including the liver and heart.

The protein localises to the nucleus. Functionally, transcriptional regulator (lacking a basic DNA binding domain) which negatively regulates the basic helix-loop-helix (bHLH) transcription factors by forming heterodimers and inhibiting their DNA binding and transcriptional activity. Influences cell fate decisions in the embryo by sequestering and blocking the activity of the bHLH transcription factors that control these decisions. Inhibits the binding of myogenic bHLH-containing complexes to E-box DNA, thereby preventing activation of muscle-specific target genes. Also inhibits the activity of neurogenic factor neurod1/neuroD. Plays a role in cell cycle progression and survival of neural crest progenitors; binding to either hes4-B/hairy2b or stat3 blocks the formation of transcription factor complexes and the repressor function of hes4-B/hairy2B, to allow neural crest progenitors to differentiate. May play a role in the regulation of the circadian rhythm. This chain is DNA-binding protein inhibitor ID-3-A (id3-a), found in Xenopus laevis (African clawed frog).